Here is a 1588-residue protein sequence, read N- to C-terminus: Multicopy suppressor of chk1 protein 1 (1588 aa).

The interval 38–60 is disordered; the sequence is HAKPSTQQQQQQQNISNETTSTG. The segment covering 51 to 60 has biased composition (polar residues); that stretch reads NISNETTSTG. Residues 82–124 enclose the JmjN domain; that stretch reads NVRVTPKKEEFSRGLDFISDLYDQTARKSGAVRVIPPDNWKCP. The PHD-type 1 zinc finger occupies 298–345; that stretch reads KCKLCAQEGSSLVTCCICQSNYHYACVEAPFAPFSDIHYWTCNSCIPS. Residues 385 to 395 are compositionally biased toward polar residues; the sequence is PLTLPSNTKTP. Residues 385–412 are disordered; the sequence is PLTLPSNTKTPPASARQSSRRTRSTSGK. Residues 475 to 645 enclose the JmjC domain; that stretch reads FPTSRQNAYY…DMHAENSFNM (171 aa). A disordered region spans residues 848 to 872; the sequence is EKRKPKRGSATHSHLESPSEEVEDL. Residues 1171–1220 form a PHD-type 2 zinc finger; the sequence is FHYCFCRQPEAGMMIECELCHEWYHAKCMKMSKKKLRADEKFICPICDYR. Residues 1319–1341 are disordered; sequence APQPPPFIGESRSNRKPRPTKRQ. The PHD-type 3 zinc-finger motif lies at 1454 to 1505; that stretch reads SVICLCRQPFAISDGTVQCHNCLEWFHYECVGLSSDIVSTLSNYACPDCCSK.

The protein resides in the nucleus. Its function is as follows. Has a role in regulating chromatin structure via global deacetylation of histone H3. This function is associated with the activity of a histone deacetylase. This Schizosaccharomyces pombe (strain 972 / ATCC 24843) (Fission yeast) protein is Multicopy suppressor of chk1 protein 1 (msc1).